Consider the following 195-residue polypeptide: CASP-like protein Os03g0196400 (195 aa).

The Cytoplasmic segment spans residues 1–38; it reads MRQQQAGGVGDGVSPGNVPVCYYGPGGRVPSSLERRAR. The chain crosses the membrane as a helical span at residues 39-59; that stretch reads AAEVLLRCAACGLAVLAAALL. Residues 60 to 81 lie on the Extracellular side of the membrane; the sequence is GADRQTRVFFSIQKVARYTDMQ. Residues 82-102 form a helical membrane-spanning segment; that stretch reads SLVLLVIANGMAACYSLIQCA. The Cytoplasmic segment spans residues 103-104; sequence RC. A helical transmembrane segment spans residues 105-125; the sequence is LVMAYIVISAVAAAMEAALIG. Topologically, residues 126-150 are extracellular; the sequence is KYGQPEFQWMKTCHLYKRFCAQAGG. The chain crosses the membrane as a helical span at residues 151–171; it reads GVACAIAASVNMVGVALISAF. Over 172–195 the chain is Cytoplasmic; the sequence is NLFRLYGNSNGGGKATTTTMAGGK.

Belongs to the Casparian strip membrane proteins (CASP) family. In terms of assembly, homodimer and heterodimers.

It is found in the cell membrane. The chain is CASP-like protein Os03g0196400 from Oryza sativa subsp. japonica (Rice).